Here is a 218-residue protein sequence, read N- to C-terminus: Glutathione S-transferase (218 aa).

Residues 2-88 (PVTLGYWDIR…YIARKHDLCG (87 aa)) enclose the GST N-terminal domain. Glutathione is bound by residues 7-8 (YW), 46-50 (WLNEK), 59-60 (NL), and 72-73 (QS). A GST C-terminal domain is found at 90–208 (TEEERIQLDI…KSSRFSCKQI (119 aa)). Tyrosine 116 is a binding site for substrate.

The protein belongs to the GST superfamily. Mu family. Homodimer.

The protein localises to the cytoplasm. It carries out the reaction RX + glutathione = an S-substituted glutathione + a halide anion + H(+). Its function is as follows. Conjugation of reduced glutathione to a wide number of exogenous and endogenous hydrophobic electrophiles. The chain is Glutathione S-transferase from Mesocricetus auratus (Golden hamster).